The sequence spans 186 residues: Elongation factor P (186 aa).

It belongs to the elongation factor P family.

It localises to the cytoplasm. The protein operates within protein biosynthesis; polypeptide chain elongation. Functionally, involved in peptide bond synthesis. Stimulates efficient translation and peptide-bond synthesis on native or reconstituted 70S ribosomes in vitro. Probably functions indirectly by altering the affinity of the ribosome for aminoacyl-tRNA, thus increasing their reactivity as acceptors for peptidyl transferase. The sequence is that of Elongation factor P from Shewanella sp. (strain W3-18-1).